The chain runs to 252 residues: Adenylate kinase (252 aa).

Gly-47–Thr-52 is a binding site for ATP. Residues Ala-67–Val-96 are NMP. Residues Thr-68, Arg-73, Gly-94 to Val-96, Gly-123 to Arg-126, and Gln-130 each bind AMP. Positions Gly-164–Asp-201 are LID. ATP is bound by residues Arg-165 and Ser-174–Tyr-175. AMP-binding residues include Arg-198 and Arg-209. ATP is bound at residue Gln-237.

Belongs to the adenylate kinase family. AK2 subfamily. Monomer.

The protein localises to the cytoplasm. The protein resides in the cytosol. Its subcellular location is the mitochondrion intermembrane space. It catalyses the reaction AMP + ATP = 2 ADP. Catalyzes the reversible transfer of the terminal phosphate group between ATP and AMP. Plays an important role in cellular energy homeostasis and in adenine nucleotide metabolism. Adenylate kinase activity is critical for regulation of the phosphate utilization and the AMP de novo biosynthesis pathways. The protein is Adenylate kinase of Lodderomyces elongisporus (strain ATCC 11503 / CBS 2605 / JCM 1781 / NBRC 1676 / NRRL YB-4239) (Yeast).